The primary structure comprises 522 residues: Serine/threonine-protein kinase BSK1-2 (522 aa).

The disordered stretch occupies residues 1 to 54 (MGCCGSSLRVGSHAPEKPPRRARPPPPPPQPHHPRRPSFTLNAHQAAASSSAAS). Glycine 2 carries the N-myristoyl glycine lipid modification. One can recognise a Protein kinase domain in the interval 79–338 (ANIVSESGEK…KLVSILQPLQ (260 aa)). Residues 85–93 (SGEKAPNLV) and lysine 111 contribute to the ATP site. Aspartate 205 functions as the Proton acceptor in the catalytic mechanism.

It belongs to the protein kinase superfamily. Ser/Thr protein kinase family.

It localises to the cell membrane. It catalyses the reaction L-seryl-[protein] + ATP = O-phospho-L-seryl-[protein] + ADP + H(+). It carries out the reaction L-threonyl-[protein] + ATP = O-phospho-L-threonyl-[protein] + ADP + H(+). Probable serine/threonine kinase that functions as a positive regulator of plant immunity. May be involved in the regulation of pattern-triggered immunity (PTI). Does not seem to be involved in responses to brassinosteroid (BR) signaling. This chain is Serine/threonine-protein kinase BSK1-2, found in Oryza sativa subsp. japonica (Rice).